The primary structure comprises 396 residues: tRNA(Met) cytidine acetate ligase (396 aa).

Residues 9 to 22 (IVEYNPFHNGHLHH), Gly-103, Asn-154, and Arg-179 contribute to the ATP site.

The protein belongs to the TmcAL family.

It localises to the cytoplasm. The catalysed reaction is cytidine(34) in elongator tRNA(Met) + acetate + ATP = N(4)-acetylcytidine(34) in elongator tRNA(Met) + AMP + diphosphate. Functionally, catalyzes the formation of N(4)-acetylcytidine (ac(4)C) at the wobble position of elongator tRNA(Met), using acetate and ATP as substrates. First activates an acetate ion to form acetyladenylate (Ac-AMP) and then transfers the acetyl group to tRNA to form ac(4)C34. This is tRNA(Met) cytidine acetate ligase from Fusobacterium nucleatum subsp. nucleatum (strain ATCC 25586 / DSM 15643 / BCRC 10681 / CIP 101130 / JCM 8532 / KCTC 2640 / LMG 13131 / VPI 4355).